The sequence spans 190 residues: MNEKACWQLPQDKESVYRHIFAGGVFAYPTEAVYGLGGNPADERAVCEILRLKGRTAAKGLIMVAGNWAQCCGWVSGVSKRDQAEMMDWAGDYPTTFIVYAGEKLCAHVATADGKTAIRISQHPLIQELCALIGQPLLSTSANLSGQEPARSVAAVRQYFPDLPMVLGALGAAERPSRIIDWHSRQVIRA.

Residues 10–190 (PQDKESVYRH…DWHSRQVIRA (181 aa)) form the YrdC-like domain.

Belongs to the SUA5 family. TsaC subfamily.

The protein resides in the cytoplasm. It carries out the reaction L-threonine + hydrogencarbonate + ATP = L-threonylcarbamoyladenylate + diphosphate + H2O. Its function is as follows. Required for the formation of a threonylcarbamoyl group on adenosine at position 37 (t(6)A37) in tRNAs that read codons beginning with adenine. Catalyzes the conversion of L-threonine, HCO(3)(-)/CO(2) and ATP to give threonylcarbamoyl-AMP (TC-AMP) as the acyladenylate intermediate, with the release of diphosphate. In Dichelobacter nodosus (strain VCS1703A), this protein is Threonylcarbamoyl-AMP synthase.